A 225-amino-acid polypeptide reads, in one-letter code: NAD(P)H-quinone oxidoreductase subunit K, chloroplastic (225 aa).

The [4Fe-4S] cluster site is built by cysteine 43, cysteine 44, cysteine 108, and cysteine 139.

The protein belongs to the complex I 20 kDa subunit family. As to quaternary structure, NDH is composed of at least 16 different subunits, 5 of which are encoded in the nucleus. The cofactor is [4Fe-4S] cluster.

It localises to the plastid. The protein localises to the chloroplast thylakoid membrane. It carries out the reaction a plastoquinone + NADH + (n+1) H(+)(in) = a plastoquinol + NAD(+) + n H(+)(out). The catalysed reaction is a plastoquinone + NADPH + (n+1) H(+)(in) = a plastoquinol + NADP(+) + n H(+)(out). In terms of biological role, NDH shuttles electrons from NAD(P)H:plastoquinone, via FMN and iron-sulfur (Fe-S) centers, to quinones in the photosynthetic chain and possibly in a chloroplast respiratory chain. The immediate electron acceptor for the enzyme in this species is believed to be plastoquinone. Couples the redox reaction to proton translocation, and thus conserves the redox energy in a proton gradient. This is NAD(P)H-quinone oxidoreductase subunit K, chloroplastic from Lepidium virginicum (Virginia pepperweed).